A 294-amino-acid chain; its full sequence is MAESLQLVIISGMSGAGKTVAVQSFEDLGYFCIDNMPPALLPKFSELVEESGKIKKVALVIDLRSRAFYDEIMDMLANLDNTDFVSTRILFLDASNEELVSRYKETRRSHPLAMEGRVMDGVRKERELLAPLKDRASYVIDTSTLTPRELRESIFDKFETDQDETFHIEMLSFGFKYGLPIDADIVMDVRFLPNPYYIPELKKLTGLDKPVADYVMQQPATEAFYQQFLSMLESIMPGYEAEGKSSLTIAIGCTGGQHRSVALTQRIGEALAKHYKVHISHRDIEKRKETVNRS.

12–19 (GMSGAGKT) serves as a coordination point for ATP. 62–65 (DLRS) is a binding site for GTP.

Belongs to the RapZ-like family.

Functionally, displays ATPase and GTPase activities. This chain is Nucleotide-binding protein lp_0779, found in Lactiplantibacillus plantarum (strain ATCC BAA-793 / NCIMB 8826 / WCFS1) (Lactobacillus plantarum).